The chain runs to 692 residues: Proprotein convertase subtilisin/kexin type 9 (692 aa).

The N-terminal stretch at Met-1–Ala-30 is a signal peptide. Positions Gln-31–Gln-152 are excised as a propeptide. Tyr-38 is subject to Sulfotyrosine. Residue Ser-47 is modified to Phosphoserine. In terms of domain architecture, Inhibitor I9 spans Thr-77–Val-149. The 290-residue stretch at Pro-155 to Leu-444 folds into the Peptidase S8 domain. Active-site charge relay system residues include Asp-186 and His-226. 2 disulfides stabilise this stretch: Cys-223–Cys-255 and Cys-323–Cys-358. Catalysis depends on Ser-386, which acts as the Charge relay system. The interval Arg-450–Gln-692 is C-terminal domain. Intrachain disulfides connect Cys-457–Cys-527, Cys-477–Cys-526, and Cys-486–Cys-509. N-linked (GlcNAc...) asparagine glycosylation is present at Asn-533. Cystine bridges form between Cys-534-Cys-601, Cys-552-Cys-600, Cys-562-Cys-588, Cys-608-Cys-679, Cys-626-Cys-678, and Cys-635-Cys-654. Ser-688 carries the post-translational modification Phosphoserine.

It belongs to the peptidase S8 family. As to quaternary structure, monomer. Can self-associate to form dimers and higher multimers which may have increased LDLR degrading activity. The precursor protein but not the mature protein may form multimers. Interacts with APOB, VLDLR, LRP8/APOER2 and BACE1. The full-length immature form (pro-PCSK9) interacts with SCNN1A, SCNN1B and SCNN1G. The pro-PCSK9 form (via C-terminal domain) interacts with LDLR. Interacts (via the C-terminal domain) with ANXA2 (via repeat Annexin 1); the interaction inhibits the degradation of LDLR. It depends on Ca(2+) as a cofactor. Cleavage by furin and PCSK5 generates a truncated inactive protein that is unable to induce LDLR degradation. In terms of processing, undergoes autocatalytic cleavage in the endoplasmic reticulum to release the propeptide from the N-terminus and the cleavage of the propeptide is strictly required for its maturation and activation. The cleaved propeptide however remains associated with the catalytic domain through non-covalent interactions, preventing potential substrates from accessing its active site. As a result, it is secreted from cells as a propeptide-containing, enzymatically inactive protein. Post-translationally, phosphorylation protects the propeptide against proteolysis.

Its subcellular location is the cytoplasm. It is found in the secreted. It localises to the endosome. The protein resides in the lysosome. The protein localises to the cell surface. Its subcellular location is the endoplasmic reticulum. It is found in the golgi apparatus. Its activity is regulated as follows. Its proteolytic activity is autoinhibited by the non-covalent binding of the propeptide to the catalytic domain. Inhibited by EGTA. Its function is as follows. Crucial player in the regulation of plasma cholesterol homeostasis. Binds to low-density lipid receptor family members: low density lipoprotein receptor (LDLR), very low density lipoprotein receptor (VLDLR), apolipoprotein E receptor (LRP1/APOER) and apolipoprotein receptor 2 (LRP8/APOER2), and promotes their degradation in intracellular acidic compartments. Acts via a non-proteolytic mechanism to enhance the degradation of the hepatic LDLR through a clathrin LDLRAP1/ARH-mediated pathway. May prevent the recycling of LDLR from endosomes to the cell surface or direct it to lysosomes for degradation. Can induce ubiquitination of LDLR leading to its subsequent degradation. Inhibits intracellular degradation of APOB via the autophagosome/lysosome pathway in a LDLR-independent manner. Involved in the disposal of non-acetylated intermediates of BACE1 in the early secretory pathway. Inhibits epithelial Na(+) channel (ENaC)-mediated Na(+) absorption by reducing ENaC surface expression primarily by increasing its proteasomal degradation. Regulates neuronal apoptosis via modulation of LRP8/APOER2 levels and related anti-apoptotic signaling pathways. The protein is Proprotein convertase subtilisin/kexin type 9 (PCSK9) of Macaca nemestrina (Pig-tailed macaque).